Consider the following 268-residue polypeptide: Phosphonates import ATP-binding protein PhnC (268 aa).

Positions 11 to 254 (LHAEAVTKRF…EVMAIYQRAE (244 aa)) constitute an ABC transporter domain. 43-50 (GLSGSGKS) contributes to the ATP binding site.

Belongs to the ABC transporter superfamily. Phosphonates importer (TC 3.A.1.9.1) family. As to quaternary structure, the complex is composed of two ATP-binding proteins (PhnC), two transmembrane proteins (PhnE) and a solute-binding protein (PhnD).

The protein localises to the cell membrane. It catalyses the reaction phosphonate(out) + ATP + H2O = phosphonate(in) + ADP + phosphate + H(+). Part of the ABC transporter complex PhnCDE involved in phosphonates import. Responsible for energy coupling to the transport system. This Nocardia farcinica (strain IFM 10152) protein is Phosphonates import ATP-binding protein PhnC.